The primary structure comprises 277 residues: Caspase-3 (277 aa).

At Met-1 the chain carries N-acetylmethionine. 2 propeptides span residues 1-9 and 10-28; these read MENNETSVD and SKSI…KSMD. Lys-11 is subject to N6-acetyllysine. At Ser-26 the chain carries Phosphoserine. Active-site residues include His-121 and Cys-163. Cys-163 carries the post-translational modification S-nitrosocysteine; in inhibited form.

Belongs to the peptidase C14A family. In terms of assembly, heterotetramer that consists of two anti-parallel arranged heterodimers, each one formed by a 17 kDa (p17) and a 12 kDa (p12) subunit. Interacts with BIRC6/bruce. In terms of processing, cleavage by granzyme B, caspase-6, caspase-8 and caspase-10 generates the two active subunits. Additional processing of the propeptides is likely due to the autocatalytic activity of the activated protease. Active heterodimers between the small subunit of caspase-7 protease and the large subunit of caspase-3 also occur and vice versa. Post-translationally, S-nitrosylated on its catalytic site cysteine in unstimulated cell lines and denitrosylated upon activation of the Fas apoptotic pathway, associated with an increase in intracellular caspase activity. Fas therefore activates caspase-3 not only by inducing the cleavage of the caspase zymogen to its active subunits, but also by stimulating the denitrosylation of its active site thiol. Ubiquitinated by BIRC6; this activity is inhibited by DIABLO/SMAC.

The protein resides in the cytoplasm. It carries out the reaction Strict requirement for an Asp residue at positions P1 and P4. It has a preferred cleavage sequence of Asp-Xaa-Xaa-Asp-|- with a hydrophobic amino-acid residue at P2 and a hydrophilic amino-acid residue at P3, although Val or Ala are also accepted at this position.. Inhibited by BIRC6; following inhibition of BIRC6-caspase binding by DIABLO/SMAC, BIRC6 is subjected to caspase cleavage, leading to an increase in active caspases. Involved in the activation cascade of caspases responsible for apoptosis execution. At the onset of apoptosis, it proteolytically cleaves poly(ADP-ribose) polymerase PARP1 at a '216-Asp-|-Gly-217' bond. Cleaves and activates sterol regulatory element binding proteins (SREBPs) between the basic helix-loop-helix leucine zipper domain and the membrane attachment domain. Cleaves and activates caspase-6, -7 and -9 (CASP6, CASP7 and CASP9, respectively). Cleaves and inactivates interleukin-18 (IL18). Triggers cell adhesion in sympathetic neurons through RET cleavage. Cleaves IL-1 beta between an Asp and an Ala, releasing the mature cytokine which is involved in a variety of inflammatory processes. Cleaves and inhibits serine/threonine-protein kinase AKT1 in response to oxidative stress. Acts as an inhibitor of type I interferon production during virus-induced apoptosis by mediating cleavage of antiviral proteins CGAS, IRF3 and MAVS, thereby preventing cytokine overproduction. Also involved in pyroptosis by mediating cleavage and activation of gasdermin-E (GSDME). Cleaves XRCC4 and phospholipid scramblase proteins XKR4, XKR8 and XKR9, leading to promote phosphatidylserine exposure on apoptotic cell surface. Cleaves BIRC6 following inhibition of BIRC6-caspase binding by DIABLO/SMAC. This Mesocricetus auratus (Golden hamster) protein is Caspase-3 (CASP3).